A 163-amino-acid chain; its full sequence is Aspartate 1-decarboxylase (163 aa).

Residue Ser25 is the Schiff-base intermediate with substrate; via pyruvic acid of the active site. Ser25 is modified (pyruvic acid (Ser)). Substrate is bound at residue Thr57. The active-site Proton donor is Tyr58. 73-75 (GAA) contacts substrate.

This sequence belongs to the PanD family. As to quaternary structure, heterooctamer of four alpha and four beta subunits. Pyruvate serves as cofactor. In terms of processing, is synthesized initially as an inactive proenzyme, which is activated by self-cleavage at a specific serine bond to produce a beta-subunit with a hydroxyl group at its C-terminus and an alpha-subunit with a pyruvoyl group at its N-terminus.

It is found in the cytoplasm. It catalyses the reaction L-aspartate + H(+) = beta-alanine + CO2. Its pathway is cofactor biosynthesis; (R)-pantothenate biosynthesis; beta-alanine from L-aspartate: step 1/1. Functionally, catalyzes the pyruvoyl-dependent decarboxylation of aspartate to produce beta-alanine. The polypeptide is Aspartate 1-decarboxylase (Saccharopolyspora erythraea (strain ATCC 11635 / DSM 40517 / JCM 4748 / NBRC 13426 / NCIMB 8594 / NRRL 2338)).